We begin with the raw amino-acid sequence, 102 residues long: MIELNEQIIFLGDGTEGDLEYKLYEYMIWLAKAEGIDFVVSNPYGENTVVIGGTAYEVEWRYVGLKSEEYDVTDEGKWIPIGPWFWEHGEPDFEVSSWWCEK.

This is an uncharacterized protein from Escherichia coli (Bacteriophage T4).